A 491-amino-acid chain; its full sequence is Immediate early protein IE1 (491 aa).

A compositionally biased stretch (basic and acidic residues) spans 1–11; the sequence is MESSAKRKMDP. The segment at 1 to 24 is nuclear localization signal; that stretch reads MESSAKRKMDPDNPDEGPSSKVPR. The interval 1–30 is disordered; it reads MESSAKRKMDPDNPDEGPSSKVPRPETPVT. The segment at 132–346 is interaction with host PML, interference with PML sumoylation and disruption of PML-associated nuclear bodies; that stretch reads ILDKVHEPFE…SVMKRRIEEI (215 aa). Residues 373–445 form an interaction with host STAT2 region; that stretch reads AIAEESDEEE…EEGAQEERED (73 aa). Positions 410–420 are modulation of STAT3/STAT1 signaling; it reads ATIPLSSVIVA. The interaction with host STAT3 stretch occupies residues 410–445; that stretch reads ATIPLSSVIVAENSDQEESEQSDEEEEEGAQEERED. The interval 421–472 is acidic; the sequence is ENSDQEESEQSDEEEEEGAQEEREDTVSVKSEPVSEIEEVAPEEEEDGAEEP. A disordered region spans residues 421–491; that stretch reads ENSDQEESEQ…PMVTRSKADQ (71 aa). Positions 423-444 are enriched in acidic residues; that stretch reads SDQEESEQSDEEEEEGAQEERE. The segment at 449–452 is interaction with host SUMO1; sequence VKSE. A Glycyl lysine isopeptide (Lys-Gly) (interchain with G-Cter in SUMO) cross-link involves residue lysine 450. The segment covering 455–470 has biased composition (acidic residues); it reads SEIEEVAPEEEEDGAE. The interval 475-491 is chromosome-tethering domain (CTD), binding to histones; it reads SGGKSTHPMVTRSKADQ.

It belongs to the HHV-5 IE1 protein family. In terms of assembly, forms homodimers. Interacts with human p53/TP53; this interaction inhibits p53/TP53-dependent transactivation activity. Interacts with host STAT1. Interacts with host STAT2; this interaction promotes viral growth and counteracts the antiviral interferon response. May also interact with the host STAT1-STAT2 heterodimer. Interacts with host STAT3; this interaction leads to STAT3 nuclear accumulation and disruption of IL6-induced STAT3 phosphorylation. Interacts with host PML; this interaction inhibits host PML de novo sumoylation and probably inhibits PML regulation of type I and type II interferon-induced gene expression. Interacts with host DAXX. Interacts with host SP100. Interacts with host E2F1. Interacts with host RB1. Interacts with host HDAC1; this interaction inhibits histone deacetylation and promotes viral transcription. Interacts with host HDAC2; this interaction inhibits histone deacetylation and promotes viral transcription. Interacts with host HDAC3; this interaction inhibits histone deacetylation and promotes viral transcription. Interacts with host PLSCR1; this interaction inhibits IE1 transactivating activity. Sumoylated by host PML/nuclear domain 10. Sumoylation abolishes the interaction with host STAT2 and thus the IE1-mediated repression of interferon-stimulated genes.

It localises to the host nucleus. Its function is as follows. Plays an important role in transactivating viral early genes as well as activating its own promoter, probably by altering the viral chromatin structure. Expression of IE1 and IE2 proteins is critical for the establishment of lytic infection and reactivation from viral latency. Disrupts PML-associated ND10 nuclear bodies by interfering with host PML and SP100 sumoylation thereby altering the regulation of type I and type II interferon-induced gene expression. Promotes efficient viral growth by interacting with and directing host SP100 to degradation, leading to enhanced acetylation level of histones. In addition, functions in counteracting the host innate antiviral response. Inhibits the type I interferon pathway by directly interacting with and sequestrating host STAT2. Also targets type II interferon pathway by repressing IL6- and STAT3 target genes. Repression of STAT3 genes is due to STAT3 nuclear accumulation and disruption of IL6-induced STAT3 phosphorylation by IE1. This repression is followed by phosphorylation and activation of STAT1. Inhibits host ISG transcription by sequestering host ISGF3 in a PML- and STAT2- binding dependent manner. Alters host cell cycle progression, probably through its interaction with host E2F1 or RB1 that overcomes the RB1-mediated repression of E2F-responsive promoters. May act as a E3 ubiquitin ligase targeting several host proteins including HES1 and SP100A for ubiquitination and subsequent proteasomal degradation. Impairs the radial migration of immature neurons by downregulating Gap junction alpha-1 protein/GJA1 also via ubiquitination and degradation. The polypeptide is Immediate early protein IE1 (UL123) (Human cytomegalovirus (strain Towne) (HHV-5)).